The chain runs to 394 residues: Bone morphogenetic protein 15 (394 aa).

An N-terminal signal peptide occupies residues 1–18 (MVLLSILRILLLWGLVLF). The propeptide occupies 19–269 (MEHRVQMTQV…DPSLLLRRAR (251 aa)). N-linked (GlcNAc...) asparagine glycosylation is found at Asn87 and Asn238. Intrachain disulfides connect Cys293–Cys359, Cys322–Cys391, and Cys326–Cys393. Asn375 is a glycosylation site (N-linked (GlcNAc...) asparagine).

It belongs to the TGF-beta family. Homodimer or heterodimer (Potential). But, in contrast to other members of this family, cannot be disulfide-linked.

It is found in the secreted. Functionally, may be involved in follicular development. Seems to be an oocyte-specific growth/differentiation factor that stimulates folliculogenesis and granulosa cell (GC) growth. In Bos taurus (Bovine), this protein is Bone morphogenetic protein 15 (BMP15).